Reading from the N-terminus, the 257-residue chain is Dihydroorotate dehydrogenase B (NAD(+)), electron transfer subunit (257 aa).

Residues 2 to 102 enclose the FAD-binding FR-type domain; the sequence is IGRERMTVAS…LGPLGNGFPL (101 aa). FAD is bound by residues 53-56, 70-72, and 77-78; these read RPLS, IYR, and GT. 4 residues coordinate [2Fe-2S] cluster: cysteine 221, cysteine 226, cysteine 229, and cysteine 244.

Belongs to the PyrK family. Heterotetramer of 2 PyrK and 2 PyrD type B subunits. The cofactor is [2Fe-2S] cluster. Requires FAD as cofactor.

Its pathway is pyrimidine metabolism; UMP biosynthesis via de novo pathway; orotate from (S)-dihydroorotate (NAD(+) route): step 1/1. Functionally, responsible for channeling the electrons from the oxidation of dihydroorotate from the FMN redox center in the PyrD type B subunit to the ultimate electron acceptor NAD(+). The protein is Dihydroorotate dehydrogenase B (NAD(+)), electron transfer subunit of Bacillus caldolyticus.